A 114-amino-acid polypeptide reads, in one-letter code: Beta-microseminoprotein (114 aa).

A signal peptide spans 1–20 (MNVLLGGFVIFATFVTLCNA). Intrachain disulfides connect Cys-22–Cys-70, Cys-38–Cys-62, Cys-57–Cys-93, Cys-60–Cys-69, and Cys-84–Cys-107.

It belongs to the beta-microseminoprotein family. Homodimer; Interacts with PI16.

The protein resides in the secreted. In Macaca mulatta (Rhesus macaque), this protein is Beta-microseminoprotein (MSMB).